A 152-amino-acid polypeptide reads, in one-letter code: UPF0735 ACT domain-containing protein SAS1579 (152 aa).

The region spanning 75–150 (TLILYVTDIV…YVSKVELISM (76 aa)) is the ACT domain.

Belongs to the UPF0735 family.

The chain is UPF0735 ACT domain-containing protein SAS1579 from Staphylococcus aureus (strain MSSA476).